A 606-amino-acid chain; its full sequence is Envelope glycoprotein gp95 (606 aa).

Positions 1–62 (MEAVIKAFLT…VLCEVTGVRA (62 aa)) are cleaved as a signal peptide. Residues 63–552 (DVHLLEQPGN…EWAVHLLKGL (490 aa)) lie on the Extracellular side of the membrane. N-linked (GlcNAc...) asparagine; by host glycosylation is found at asparagine 79, asparagine 120, asparagine 141, asparagine 158, and asparagine 178. Cystine bridges form between cysteine 87/cysteine 499, cysteine 121/cysteine 152, cysteine 192/cysteine 245, cysteine 258/cysteine 267, cysteine 353/cysteine 370, cysteine 410/cysteine 446, and cysteine 491/cysteine 498. The binding to host receptor stretch occupies residues 185-226 (ISGITGGCVGFRPQGVPWYLGWSRQEATRFLLRHPSFSKSTE). The N-linked (GlcNAc...) asparagine; by host glycan is linked to asparagine 257. The interval 261–288 (VGRQYRCGNARSPRPGLPEIQCTRRGGK) is binding to host receptor. 4 N-linked (GlcNAc...) asparagine; by host glycosylation sites follow: asparagine 291, asparagine 297, asparagine 307, and asparagine 315. N-linked (GlcNAc...) asparagine; by host glycosylation occurs at asparagine 391. Residues 418-438 (GPTARIFASILAPGVARAQAL) are fusion peptide. Positions 435–485 (AQALREIERLACWSVKQANLTTSFLGDLLDDVTSIRHAVLQNRAAIDFLLL) form a coiled coil. Residue asparagine 453 is glycosylated (N-linked (GlcNAc...) asparagine; by host). The interval 474 to 490 (LQNRAAIDFLLLAHGHG) is immunosuppression. Asparagine 501 carries an N-linked (GlcNAc...) asparagine; by host glycan. Positions 503 to 533 (SDHSESIQKKFQLMKEHVNKIGVDSDPIGSW) form a coiled coil. Residues 553-573 (LLGLVVILLLVVCLPCLLQIV) traverse the membrane as a helical segment. S-palmitoyl cysteine; by host attachment occurs at residues cysteine 565 and cysteine 568. Residues 574 to 606 (CGNIRKMINNSISYHTEYKKLQKACGQPESRIV) are Cytoplasmic-facing.

It belongs to the Alpharetroviruses envelope glycoprotein family. In terms of assembly, heterodimer with the transmembrane protein. The mature envelope protein (Env) consists of a trimer of SU-TM heterodimers attached by a labile interchain disulfide bond. Interacts with the host cell entry receptor TVA isoforms pg900 and pg800; this interaction allows the viral attachment. Heterodimer with the surface protein. The mature envelope protein (Env) consists of a trimer of SU-TM heterodimers attached by a labile interchain disulfide bond. Post-translationally, specific enzymatic cleavages in vivo yield mature proteins. Envelope glycoproteins are synthesized as an inactive precursor that is N-glycosylated and processed likely by host cell furin or by a furin-like protease in the Golgi to yield the mature SU and TM proteins. The cleavage site between SU and TM requires the minimal sequence [KR]-X-[KR]-R. In terms of processing, the transmembrane protein is palmitoylated. Palmitoylation is necessary for glycoprotein function and infectivity.

The protein localises to the virion membrane. The protein resides in the host cell membrane. In terms of biological role, the surface protein (SU) attaches the virus to the host cell entry receptor TVA. This interaction triggers the refolding of the transmembrane protein (TM) thereby unmasking its fusion peptide and the formation of a reactive thiolate on Cys-100 to activate its fusogenic potential. Fusion occurs at the host cell plasma membrane. Its function is as follows. The transmembrane protein (TM) acts as a class I viral fusion protein. Under the current model, the protein has at least 3 conformational states: pre-fusion native state, pre-hairpin intermediate state, and post-fusion hairpin state. During viral and target cell membrane fusion, the coiled coil regions (heptad repeats) assume a trimer-of-hairpins structure, positioning the fusion peptide in close proximity to the C-terminal region of the ectodomain. The formation of this structure appears to drive apposition and subsequent fusion of viral and target cell membranes. Membranes fusion leads to delivery of the nucleocapsid into the cytoplasm. In Avian leukosis virus subgroup A (isolate RSA) (ALV-A RSA), this protein is Envelope glycoprotein gp95 (env).